Consider the following 448-residue polypeptide: Cyclic dof factor 3 (448 aa).

The interval 26–108 (AVTVEDDEED…DGKTLKKPTK (83 aa)) is disordered. The segment covering 29–39 (VEDDEEDDWSG) has biased composition (acidic residues). The segment covering 40–54 (GDDKSPEKVTPELSD) has biased composition (basic and acidic residues). The segment covering 55 to 69 (KNNNNCNDNSFNNSK) has biased composition (low complexity). Residues 80-99 (STDQIESSDTPEDNQQTTPD) are compositionally biased toward polar residues. The segment at 110–164 (LPCPRCKSMETKFCYYNNYNINQPRHFCKACQRYWTAGGTMRNVPVGAGRRKNKS) adopts a Dof-type zinc-finger fold. Positions 112, 115, 137, and 140 each coordinate Zn(2+). 2 disordered regions span residues 243-269 (NGDD…AQSG) and 332-370 (SSSP…KQKA). Polar residues-rich tracts occupy residues 246 to 259 (DCSS…SNNH) and 332 to 347 (SSSP…NSPT). Positions 351 to 368 (HPRDEGSSKKDNETERKQ) are enriched in basic and acidic residues.

Interacts with ADO2 (via kelch repeats) and ADO3 (via kelch repeats). Expressed in the vasculature of cotyledons and hypocotyls, leaves and roots.

It localises to the nucleus. Its function is as follows. Transcription factor that binds specifically to a 5'-AA[AG]G-3' consensus core sequence. Regulates a photoperiodic flowering response. Transcriptional repressor of 'CONSTANS' expression. In Arabidopsis thaliana (Mouse-ear cress), this protein is Cyclic dof factor 3 (CDF3).